The primary structure comprises 515 residues: MKKKILLMMSLISVFFAWQLTQAKQVLAEGKVKVVTTFYPVYEFTKGVIGNDGDVSMLMKAGTEPHDFEPSTKDIKKIQDADAFVYMDDNMETWVSDVKKSLTSKKVTIVKGTGNMLLVAGAGHDHHHEDADKKHEHNKHSEEGHNHAFDPHVWLSPYRSITVVENIRDSLSKAYPEKAENFKANAATYIEKLKELDKDYTAALSDAKQKSFVTQHAAFGYMALDYGLNQISINGVTPDAEPSAKRIATLSKYVKKYGIKYIYFEENASSKVAKTLAKEAGVKAAVLSPLEGLTKKEMKAGQDYFTVMRKNLETLRLTTDVAGKEILPEKDTTKTVYNGYFKDKEVKDRQLSDWSGSWQSVYPYLQDGTLDQVWDYKAKKSKGKMTAAEYKDYYTTGYKTDVEQIKINGKKKTMTFVRNGEKKTFTYTYAGKEILTYPKGNRGVRFMFEAKEPNAGEFKYVQFSDHAIAPEKAEHFHLYWGGDSQEKLHKELEHWPTYYGSDLSGREIAQEINAH.

An N-terminal signal peptide occupies residues 1 to 28 (MKKKILLMMSLISVFFAWQLTQAKQVLA). His-66 contributes to the Zn(2+) binding site. The tract at residues 125-148 (DHHHEDADKKHEHNKHSEEGHNHA) is disordered. Positions 129-148 (EDADKKHEHNKHSEEGHNHA) are his-rich loop. The Zn(2+) site is built by His-152, His-216, and Glu-291.

It belongs to the bacterial solute-binding protein 9 family.

Part of the ATP-binding cassette (ABC) transport system AdcABC involved in zinc import. Binds zinc with high affinity and specificity and delivers it to the membrane permease for translocation into the cytoplasm. This chain is Zinc-binding protein AdcA (adcA), found in Streptococcus pyogenes serotype M18 (strain MGAS8232).